Consider the following 305-residue polypeptide: NK1 transcription factor-related protein 2 (305 aa).

Disordered regions lie at residues 51 to 158 (EEVE…KPRR) and 210 to 257 (KWKK…PGAL). Acidic residues predominate over residues 87–96 (SEAEEEEEAE). A compositionally biased stretch (basic and acidic residues) spans 97-115 (DAGRAHQPERWQGVHEGSP). Residues 129–140 (AEGLPASPGSPG) are compositionally biased toward low complexity. A DNA-binding region (homeobox) is located at residues 156–215 (PRRARTAFTYEQLVALENKFRATRYLSVCERLNLALSLSLTETQVKIWFQNRRTKWKKQN).

This sequence belongs to the NK-1 homeobox family. In terms of assembly, interacts (via the homeodomain) with HIPK1, HIPK2, and HIPK3. In terms of processing, phosphorylated by HIPK2 in vitro. In terms of tissue distribution, expression detected in the brain, testis and spleen. In the testis, expressed in the germ cells of the seminiferous epithelium, predominantly in elongating spermatids and spermatozoa. Expressed throughout the brain with highest levels in regions of the cerebral cortex, hippocampus, diencephalon, pons, medulla and cerebellum.

It localises to the nucleus. The protein resides in the nucleolus. In terms of biological role, transcriptional repressor. May play a role in early development as a Wnt/beta-catenin effector, hence controlling pluripotency and preimplantation development of embryonic stem cells. May promote adipogenesis in mesenchymal stem cells, possibly by inhibiting the expression of the antiadipogenic factor NR2F2. May inhibit osteoblastogenic differentiation. The protein is NK1 transcription factor-related protein 2 (Nkx1-2) of Mus musculus (Mouse).